The sequence spans 728 residues: Hepatocyte growth factor (728 aa).

An N-terminal signal peptide occupies residues 1–32 (MMWGTKLLPVLLLQHVLLHLLLLPVTIPYAEG). Q33 carries the post-translational modification Pyrrolidone carboxylic acid. The 87-residue stretch at 38–124 (NTLHEFKKSA…HEFDLYENKD (87 aa)) folds into the PAN domain. Disulfide bonds link C71-C97, C75-C85, C129-C207, C150-C190, C178-C202, C212-C289, C233-C272, and C261-C284. 2 consecutive Kringle domains span residues 129-207 (CIIG…IPQC) and 212-289 (CMTC…IKMC). An N-linked (GlcNAc...) asparagine glycan is attached at N295. Cystine bridges form between C306–C384, C327–C366, C355–C378, C392–C470, C413–C453, C441–C465, C488–C607, C520–C536, C615–C682, C645–C661, and C672–C700. Kringle domains follow at residues 306 to 384 (CIKG…IPKC) and 392 to 470 (CYRG…ISRC). The N-linked (GlcNAc...) asparagine glycan is linked to N403. One can recognise a Peptidase S1 domain in the interval 496–724 (VVNGIPTQTT…YAKWIHKVIL (229 aa)). Residues N569 and N656 are each glycosylated (N-linked (GlcNAc...) asparagine).

This sequence belongs to the peptidase S1 family. Plasminogen subfamily. In terms of assembly, dimer of an alpha chain and a beta chain linked by a disulfide bond. Interacts with SRPX2; the interaction increases HGF mitogenic activity. In terms of processing, the single-chain precursor undergoes proteolytic processing by TMPRSS13 resulting in an active two-chain form. The single-chain precursor undergoes proteolytic processing by HGFAC resulting in an active two-chain form.

Functionally, potent mitogen for mature parenchymal hepatocyte cells, seems to be a hepatotrophic factor, and acts as a growth factor for a broad spectrum of tissues and cell types. Activating ligand for the receptor tyrosine kinase MET by binding to it and promoting its dimerization. Activates MAPK signaling following TMPRSS13 cleavage and activation. This Rattus norvegicus (Rat) protein is Hepatocyte growth factor (Hgf).